We begin with the raw amino-acid sequence, 451 residues long: UDP-N-acetylmuramoylalanine--D-glutamate ligase (451 aa).

118–124 is an ATP binding site; sequence GSNGKTT.

This sequence belongs to the MurCDEF family.

The protein localises to the cytoplasm. It carries out the reaction UDP-N-acetyl-alpha-D-muramoyl-L-alanine + D-glutamate + ATP = UDP-N-acetyl-alpha-D-muramoyl-L-alanyl-D-glutamate + ADP + phosphate + H(+). It functions in the pathway cell wall biogenesis; peptidoglycan biosynthesis. In terms of biological role, cell wall formation. Catalyzes the addition of glutamate to the nucleotide precursor UDP-N-acetylmuramoyl-L-alanine (UMA). This chain is UDP-N-acetylmuramoylalanine--D-glutamate ligase, found in Shouchella clausii (strain KSM-K16) (Alkalihalobacillus clausii).